The sequence spans 433 residues: DNA polymerase processivity factor (433 aa).

The interval 274–433 (RGDPFDKNYV…VPNTKKQKCG (160 aa)) is disordered. 3 stretches are compositionally biased toward gly residues: residues 289–298 (SRGGGGGGGS), 325–336 (GLGGLGGGGGGG), and 344–359 (GGGG…GGGG). Residues 360–376 (GDHDHGLSSKEKYEQHK) show a composition bias toward basic and acidic residues. A compositionally biased stretch (gly residues) spans 385 to 398 (GGSGGGGGGGGGGL). Residue K410 forms a Glycyl lysine isopeptide (Lys-Gly) (interchain with G-Cter in host SUMO1) linkage. S413, S415, and S418 each carry phosphoserine.

The protein belongs to the herpesviridae polymerase accessory protein family. In terms of assembly, forms homodimers. Interacts with host SMARCB1. Interacts with host NCL/nucleolin; this interaction is important for the organization of proteins within viral replication compartments. Interacts with UL112/UL113; this interaction is necessary for efficient viral DNA replication. Interacts with UL84. Interacts with the uracil DNA glycosylase UL114. Interacts with the DNA polymerase catalytic subunit UL54. Interacts with host IRF3. Interacts with host RELA. Post-translationally, phosphorylated by UL97 on serine residues, phosphorylation seems important for UL44 nuclear entry but does not directly affect its role in replication. Sumoylated. Sumoylation on Lys-410 increases viral DNA replication.

The protein resides in the virion. It is found in the host nucleus. Accessory subunit of the DNA polymerase that plays an essential role in viral DNA replication and acts by increasing the processivity of polymerization. Forms dimers that binds to double-stranded DNA and UL54 specifically to stimulates long chain DNA synthesis efficiently. Plays an important role in maintaining the structure of viral replication compartments by interacting with host nucleolin/NUC. In addition, suppresses innate immune responses through effects on host IRF3 and NF-kappa-B. Mechanistically, interfere with the binding of IRF3 and the p65 NF-kappa-B subunit to the promoters of antiviral genes, thereby inhibiting the expression of these genes. This is DNA polymerase processivity factor (UL44) from Homo sapiens (Human).